A 159-amino-acid polypeptide reads, in one-letter code: Eukaryotic translation initiation factor 5A (159 aa).

At Lys-51 the chain carries Hypusine.

It belongs to the eIF-5A family. Post-translationally, lys-51 undergoes hypusination, a unique post-translational modification that consists in the addition of a butylamino group from spermidine to lysine side chain, leading to the formation of the unusual amino acid hypusine. eIF-5As are the only known proteins to undergo this modification, which is essential for their function.

The protein resides in the cytoplasm. Translation factor that promotes translation elongation and termination, particularly upon ribosome stalling at specific amino acid sequence contexts. Binds between the exit (E) and peptidyl (P) site of the ribosome and promotes rescue of stalled ribosome: specifically required for efficient translation of polyproline-containing peptides as well as other motifs that stall the ribosome. Acts as a ribosome quality control (RQC) cofactor by joining the RQC complex to facilitate peptidyl transfer during CAT tailing step. Functions as a regulator of autophagy. This is Eukaryotic translation initiation factor 5A from Drosophila melanogaster (Fruit fly).